Here is a 341-residue protein sequence, read N- to C-terminus: KH domain-containing RNA-binding protein QKI (341 aa).

Positions 11-82 (PKPTPDYLMQ…PDAVGPIVQL (72 aa)) are qua1 domain; involved in homodimerization. Residues 87–153 (YVPVKEYPDF…WEHLNEDLHV (67 aa)) enclose the KH domain. A qua2 domain; involved in RNA binding region spans residues 182-213 (AAEGEDSLKKMQLMELAILNGTYRDANIKSPA). Residue serine 188 is modified to Phosphoserine. Arginine 227 is subject to Omega-N-methylarginine. The residue at position 242 (arginine 242) is an Asymmetric dimethylarginine; by CARM1; alternate. Position 242 is an omega-N-methylarginine; alternate (arginine 242). At arginine 256 the chain carries Omega-N-methylarginine. Positions 276–279 (PPGP) match the SH3-binding motif. The Nuclear localization signal motif lies at 324–330 (RVHPYQR).

This sequence belongs to the quaking family. As to quaternary structure, homodimer; does not require RNA to homodimerize. Able to heterodimerize with BICC1. In terms of processing, methylated by PRMT1. Tyrosine phosphorylated at its C-terminus, probably by FYN. Phosphorylation leads to decreased mRNA-binding affinity, affecting transport and/or stabilization of MBP mRNA. Post-translationally, ubiquitinated by RNF6 in macrophages, leading to its degradation.

It localises to the nucleus. The protein resides in the cytoplasm. Functionally, RNA reader protein, which recognizes and binds specific RNAs, thereby regulating RNA metabolic processes, such as pre-mRNA splicing, circular RNA (circRNA) formation, mRNA export, mRNA stability and/or translation. Involved in various cellular processes, such as mRNA storage into stress granules, apoptosis, lipid deposition, interferon response, glial cell fate and development. Binds to the 5'-NACUAAY-N(1,20)-UAAY-3' RNA core sequence. Acts as a mRNA modification reader that specifically recognizes and binds mRNA transcripts modified by internal N(7)-methylguanine (m7G). Promotes the formation of circular RNAs (circRNAs) during the epithelial to mesenchymal transition and in cardiomyocytes: acts by binding to sites flanking circRNA-forming exons. CircRNAs are produced by back-splicing circularization of pre-mRNAs. Plays a central role in myelinization via 3 distinct mechanisms. First, acts by protecting and promoting stability of target mRNAs such as MBP, SIRT2 and CDKN1B, which promotes oligodendrocyte differentiation. Second, participates in mRNA transport by regulating the nuclear export of MBP mRNA. Finally, indirectly regulates mRNA splicing of MAG pre-mRNA during oligodendrocyte differentiation by acting as a negative regulator of MAG exon 12 alternative splicing: acts by binding to HNRNPA1 mRNA splicing factor, preventing its translation. Involved in microglia differentiation and remyelination by regulating microexon alternative splicing of the Rho GTPase pathway. Involved in macrophage differentiation: promotes monocyte differentiation by regulating pre-mRNA splicing in naive peripheral blood monocytes. Acts as an important regulator of muscle development: required for the contractile function of cardiomyocytes by regulating alternative splicing of cardiomyocyte transcripts. Acts as a negative regulator of thermogenesis by decreasing stability, nuclear export and translation of mRNAs encoding PPARGC1A and UCP1. Also required for visceral endoderm function and blood vessel development. May also play a role in smooth muscle development. In addition to its RNA-binding activity, also acts as a nuclear transcription coactivator for SREBF2/SREBP2. The sequence is that of KH domain-containing RNA-binding protein QKI from Bos taurus (Bovine).